A 175-amino-acid polypeptide reads, in one-letter code: Ribosome maturation factor RimM (175 aa).

The PRC barrel domain occupies Asp-98–Leu-172.

Belongs to the RimM family. Binds ribosomal protein uS19.

The protein resides in the cytoplasm. Its function is as follows. An accessory protein needed during the final step in the assembly of 30S ribosomal subunit, possibly for assembly of the head region. Essential for efficient processing of 16S rRNA. May be needed both before and after RbfA during the maturation of 16S rRNA. It has affinity for free ribosomal 30S subunits but not for 70S ribosomes. This Synechococcus sp. (strain RCC307) protein is Ribosome maturation factor RimM.